Here is a 346-residue protein sequence, read N- to C-terminus: UDP-3-O-acylglucosamine N-acyltransferase (346 aa).

H240 functions as the Proton acceptor in the catalytic mechanism.

The protein belongs to the transferase hexapeptide repeat family. LpxD subfamily. As to quaternary structure, homotrimer.

The catalysed reaction is a UDP-3-O-[(3R)-3-hydroxyacyl]-alpha-D-glucosamine + a (3R)-hydroxyacyl-[ACP] = a UDP-2-N,3-O-bis[(3R)-3-hydroxyacyl]-alpha-D-glucosamine + holo-[ACP] + H(+). It functions in the pathway bacterial outer membrane biogenesis; LPS lipid A biosynthesis. Catalyzes the N-acylation of UDP-3-O-acylglucosamine using 3-hydroxyacyl-ACP as the acyl donor. Is involved in the biosynthesis of lipid A, a phosphorylated glycolipid that anchors the lipopolysaccharide to the outer membrane of the cell. In Bacteroides thetaiotaomicron (strain ATCC 29148 / DSM 2079 / JCM 5827 / CCUG 10774 / NCTC 10582 / VPI-5482 / E50), this protein is UDP-3-O-acylglucosamine N-acyltransferase.